Reading from the N-terminus, the 746-residue chain is Histone-lysine N-methyltransferase EZH2 (746 aa).

The tract at residues 1–340 is interaction with DNMT1, DNMT3A and DNMT3B; it reads MGQTGKKSEK…AKEFAAALTA (340 aa). Serine 21 is modified (phosphoserine; by PKB/AKT1). The interval 39-68 is interaction with EED; that stretch reads KSMFSSNRQKILERTEILNQEWKQRRIQPV. O-linked (GlcNAc) serine glycosylation is present at serine 75. A Phosphoserine modification is found at serine 76. Residues 180–222 are disordered; it reads QYNDDDDDDDGDDPEEREEKQKDLEDHRDDKESRPPRKFPSDK. The segment covering 182–195 has biased composition (acidic residues); it reads NDDDDDDDGDDPEE. Positions 196–222 are enriched in basic and acidic residues; it reads REEKQKDLEDHRDDKESRPPRKFPSDK. Residues 329 to 522 are interaction with CDYL; that stretch reads EGAKEFAAAL…SSNHVYNYQP (194 aa). Position 339 is a phosphothreonine (threonine 339). The interval 340 to 426 is disordered; sequence AERIKTPPKR…PIKMKPNIEP (87 aa). Position 345 is a phosphothreonine; by CDK1 and CDK2 (threonine 345). A compositionally biased stretch (basic residues) spans 345-357; that stretch reads TPPKRPGGRRRGR. Phosphoserine occurs at positions 363 and 366. At threonine 367 the chain carries Phosphothreonine. Positions 374-385 are enriched in basic and acidic residues; it reads ESKDTDSDREAG. A Phosphothreonine modification is found at threonine 487. One can recognise a CXC domain in the interval 503 to 605; the sequence is CRKIQLKKDG…SKNVSCKNCS (103 aa). The 116-residue stretch at 612–727 folds into the SET domain; that stretch reads KHLLLAPSDV…TGEELFFDYR (116 aa). A Glycyl lysine isopeptide (Lys-Gly) (interchain with G-Cter in SUMO2) cross-link involves residue lysine 634.

It belongs to the class V-like SAM-binding methyltransferase superfamily. Histone-lysine methyltransferase family. EZ subfamily. As to quaternary structure, component of the PRC2/EED-EZH2 complex, which includes EED, EZH2, SUZ12, RBBP4 and RBBP7 and possibly AEBP2. The minimum components required for methyltransferase activity of the PRC2/EED-EZH2 complex are EED, EZH2 and SUZ12. The PRC2 complex may also interact with DNMT1, DNMT3A, DNMT3B and PHF1 via the EZH2 subunit and with SIRT1 via the SUZ12 subunit. Interacts with HDAC1 and HDAC2. Binds ATRX via the SET domain. Interacts with PRAME. Interacts with CDYL. Interacts with BMAL1, CLOCK and CRY1. Interacts with DNMT3L; the interaction is direct. Interacts with EZHIP; the interaction blocks EZH2 methyltransferase activity. Interacts with ZNF263; recruited to the SIX3 promoter along with other proteins involved in chromatin modification and transcriptional corepression where it contributes to transcriptional repression. Interacts with ARMC12. Interacts with ZMYND8; the interaction is dependent on the presence of chromatin. Interacts with DDX18; this interaction inhibits the PRC2 complex. Post-translationally, phosphorylated by AKT1. Phosphorylation by AKT1 reduces methyltransferase activity. Phosphorylation at Thr-345 by CDK1 and CDK2 promotes maintenance of H3K27me3 levels at EZH2-target loci, thus leading to epigenetic gene silencing. In terms of processing, sumoylated. Glycosylated: O-GlcNAcylation at Ser-75 by OGT increases stability of EZH2 and facilitates the formation of H3K27me3 by the PRC2/EED-EZH2 complex.

Its subcellular location is the nucleus. The enzyme catalyses L-lysyl(27)-[histone H3] + 3 S-adenosyl-L-methionine = N(6),N(6),N(6)-trimethyl-L-lysyl(27)-[histone H3] + 3 S-adenosyl-L-homocysteine + 3 H(+). Functionally, polycomb group (PcG) protein. Catalytic subunit of the PRC2/EED-EZH2 complex, which methylates 'Lys-9' (H3K9me) and 'Lys-27' (H3K27me) of histone H3, leading to transcriptional repression of the affected target gene. Able to mono-, di- and trimethylate 'Lys-27' of histone H3 to form H3K27me1, H3K27me2 and H3K27me3, respectively. Displays a preference for substrates with less methylation, loses activity when progressively more methyl groups are incorporated into H3K27, H3K27me0 &gt; H3K27me1 &gt; H3K27me2. Compared to EZH1-containing complexes, it is more abundant in embryonic stem cells and plays a major role in forming H3K27me3, which is required for embryonic stem cell identity and proper differentiation. The PRC2/EED-EZH2 complex may also serve as a recruiting platform for DNA methyltransferases, thereby linking two epigenetic repression systems. EZH2 can also methylate non-histone proteins such as the transcription factor GATA4 and the nuclear receptor RORA. Regulates the circadian clock via histone methylation at the promoter of the circadian genes. Essential for the CRY1/2-mediated repression of the CLOCK-BMAL1 transcriptional activation of PER1/2. Involved in the di and trimethylation of 'Lys-27' of histone H3 on PER1/2 promoters which is necessary for the CRY1/2 proteins to inhibit transcription. The protein is Histone-lysine N-methyltransferase EZH2 (EZH2) of Macaca fascicularis (Crab-eating macaque).